The following is a 2159-amino-acid chain: Calpain-type cysteine protease DEK1 (2159 aa).

Residues 1–33 (MEGEGHHGVVLACSICGFLFAVLSPFSFWVLWA) form the signal peptide. The Extracellular portion of the chain corresponds to 34-70 (VNWRPWRLYSWIYARKWPTYVQGPQLSTLCSLLTLCA). The helical transmembrane segment at 71-91 (WLVVISPIAVLLVWGSVLIAL) threads the bilayer. Over 92–95 (MERN) the chain is Cytoplasmic. A helical membrane pass occupies residues 96-116 (IIGLAVIMAGVALLLSFYSIM). At 117 to 127 (LWWRTQWQSSE) the chain is on the extracellular side. The helical transmembrane segment at 128–148 (AVAYLLLLAVCLLCAYDFCAI) threads the bilayer. Topologically, residues 149 to 164 (YVTAGASASELNSPSG) are cytoplasmic. A helical transmembrane segment spans residues 165-185 (FFFGVSVISLAINMLFICKIL). The Extracellular portion of the chain corresponds to 186–236 (FNVSGFDVDEYVRRSYKFAYSDCVEVAPVSCSPEPPDPSELYMTKSSRVKH). Residues 237–257 (LGLLYISSLLVLVGYSILYGL) form a helical membrane-spanning segment. Over 258–264 (TSKEARW) the chain is Cytoplasmic. Residues 265-285 (LGALTSVAVVILDWNLGLCSF) traverse the membrane as a helical segment. Over 286–294 (RFELLKSRM) the chain is Extracellular. Residues 295-315 (IVLFVAGTSRAFLVSFGVHYW) form a helical membrane-spanning segment. At 316-320 (YLGHC) the chain is on the cytoplasmic side. Residues 321 to 341 (ISYAFVASVLLSAAVSSWLSI) form a helical membrane-spanning segment. At 342–623 (SNPSVARIDA…LIFHHLAGSP (282 aa)) the chain is on the extracellular side. The tract at residues 365 to 409 (RKGQNSSSNSSEGCGSSVKRSSGSVEAGQNGNAMDSMYRSNSQSD) is disordered. Residues 369-381 (NSSSNSSEGCGSS) show a composition bias toward low complexity. The segment covering 382 to 409 (VKRSSGSVEAGQNGNAMDSMYRSNSQSD) has biased composition (polar residues). Residues 624 to 644 (IRAFIVFTVMFIIETATVAIY) form a helical membrane-spanning segment. Over 645–660 (RPETIKVINATHEQFE) the chain is Cytoplasmic. Residues 661 to 681 (FGFSILLLSPVVCSIMAFIWS) traverse the membrane as a helical segment. At 682–694 (LRAEEMLMTSKPQ) the chain is on the extracellular side. Residues 695–715 (KYGFIAWLLSTCVGLFLSFLS) traverse the membrane as a helical segment. Over 716–719 (KSSV) the chain is Cytoplasmic. A helical membrane pass occupies residues 720-740 (ILGLSLTVPLMVACLSFAVPI). Over 741-770 (WIRNGYSFWIPGREFANRENVSQAPGEKER) the chain is Extracellular. The helical transmembrane segment at 771-791 (ALFVITIAVFTASIIGLGAIV) threads the bilayer. At 792–822 (SAKPLDALGYKGWDADKNSSYSPYATSMYLG) the chain is on the cytoplasmic side. Residues 823-843 (WALSSTIAVITTGLIPIVAWF) form a helical membrane-spanning segment. Over 844–853 (ATYRFSPSSA) the chain is Extracellular. A helical membrane pass occupies residues 854–874 (ICVGLFATVLVSFCGASYWGV). Topologically, residues 875 to 887 (VNSREDGVPLKAD) are cytoplasmic. A helical membrane pass occupies residues 888-908 (FLAALLPLLCIPAFFSLFTGL). Residues 909–921 (YKWKDDDWKISRG) are Extracellular-facing. A helical transmembrane segment spans residues 922-942 (VYLFVGMGMLLLFGAVAAVIV). At 943 to 946 (TIRP) the chain is on the cytoplasmic side. A helical membrane pass occupies residues 947 to 967 (WTVGVACLVAILFLVFVIGVI). The Extracellular segment spans residues 968–981 (HYWTSNNFYLTRTQ). A helical transmembrane segment spans residues 982 to 1002 (MLLVCSIAFLLALAAFLMGLF). Residues 1003-1016 (HGKPFVGASIGYFS) lie on the Cytoplasmic side of the membrane. A helical membrane pass occupies residues 1017–1037 (FIFLLTGRALTVLLSPPIVVY). Residues 1038–1060 (SPRVLPVYVYDAHADSAKNVSYA) lie on the Extracellular side of the membrane. The helical transmembrane segment at 1061–1081 (FLILYGIALATEVWGVIASLI) threads the bilayer. Residues 1082-2159 (MNPPFVGAGV…SKASIRLEAV (1078 aa)) lie on the Cytoplasmic side of the membrane. A phosphoserine mark is found at Ser-1371 and Ser-1376. A Calpain catalytic 1 domain is found at 1417–1609 (TGRHCGELDL…MSPAEYGFFD (193 aa)). A Phosphoserine modification is found at Ser-1665. The region spanning 1703-2005 (NFTDQEFPPE…FRSIYVCRVY (303 aa)) is the Calpain catalytic 2 domain. Residues Cys-1769, His-1927, and Asn-1947 contribute to the active site.

This sequence belongs to the peptidase C2 family. Autocatalytic proteolytic cleavage leading to the production of mainly cytoplasmic localized subproducts of about 85 and 120 kDa. As to expression, expressed in most tissues at low levels ranging from 30 to 55 ppm. Present in all endosperm cells at transcript level, but confined to aleurones at protein level.

The protein localises to the endoplasmic reticulum membrane. Its subcellular location is the cytoplasm. The protein resides in the cell membrane. It localises to the endosome membrane. Its function is as follows. Essential protease involved in epiderm development. Required for aleurone cell development in the endosperm probably by maintaining and restricting the aleurone and embryonic epidermal L1 cell-layer fates as well as meristems organization. Involved in the maintenance of adaxial/abaxial axis information in developing leaves, probably by regulating cell proliferation and expansion. Does not need calcium ions to be active. The sequence is that of Calpain-type cysteine protease DEK1 (DEK1) from Zea mays (Maize).